Reading from the N-terminus, the 384-residue chain is S-adenosylmethionine synthase (384 aa).

H15 is an ATP binding site. Residue D17 participates in Mg(2+) binding. K(+) is bound at residue E43. E56 and Q99 together coordinate L-methionine. Residues 99–109 (QSSDINQGVDR) form a flexible loop region. Residues 164-166 (DAK), 230-231 (RF), D239, 245-246 (RK), A262, and K266 contribute to the ATP site. D239 provides a ligand contact to L-methionine. Residue K270 coordinates L-methionine.

This sequence belongs to the AdoMet synthase family. In terms of assembly, homotetramer; dimer of dimers. Mg(2+) is required as a cofactor. K(+) serves as cofactor.

The protein resides in the cytoplasm. It catalyses the reaction L-methionine + ATP + H2O = S-adenosyl-L-methionine + phosphate + diphosphate. Its pathway is amino-acid biosynthesis; S-adenosyl-L-methionine biosynthesis; S-adenosyl-L-methionine from L-methionine: step 1/1. Catalyzes the formation of S-adenosylmethionine (AdoMet) from methionine and ATP. The overall synthetic reaction is composed of two sequential steps, AdoMet formation and the subsequent tripolyphosphate hydrolysis which occurs prior to release of AdoMet from the enzyme. This chain is S-adenosylmethionine synthase, found in Pasteurella multocida (strain Pm70).